Reading from the N-terminus, the 405-residue chain is Threonine synthase (405 aa).

K106 bears the N6-(pyridoxal phosphate)lysine mark. Pyridoxal 5'-phosphate-binding positions include N132, 233–237, and T371; that span reads GNAGN.

The protein belongs to the threonine synthase family. Requires pyridoxal 5'-phosphate as cofactor.

The catalysed reaction is O-phospho-L-homoserine + H2O = L-threonine + phosphate. Its pathway is amino-acid biosynthesis; L-threonine biosynthesis; L-threonine from L-aspartate: step 5/5. Its function is as follows. Catalyzes the gamma-elimination of phosphate from L-phosphohomoserine and the beta-addition of water to produce L-threonine. The chain is Threonine synthase (thrC) from Methanocaldococcus jannaschii (strain ATCC 43067 / DSM 2661 / JAL-1 / JCM 10045 / NBRC 100440) (Methanococcus jannaschii).